A 308-amino-acid chain; its full sequence is UPF0282 protein PYRAB09800 (308 aa).

It belongs to the UPF0282 family.

The protein is UPF0282 protein PYRAB09800 of Pyrococcus abyssi (strain GE5 / Orsay).